The chain runs to 229 residues: Prolactin (229 aa).

Residues 1–30 (MDSKVSSQKGSRLLLLLVVSNLLLCQGVVS) form the signal peptide. Cys-34 and Cys-41 form a disulfide bridge. Phosphoserine occurs at positions 56, 64, and 120. 2 cysteine pairs are disulfide-bonded: Cys-88–Cys-204 and Cys-221–Cys-229.

This sequence belongs to the somatotropin/prolactin family. In terms of assembly, interacts with PRLR.

The protein resides in the secreted. Functionally, prolactin acts primarily on the mammary gland by promoting lactation. This chain is Prolactin (PRL), found in Cervus elaphus (Red deer).